Reading from the N-terminus, the 386-residue chain is MSSAHNTLESIKYRRGVLQLLDQRRLPLETVYCDITSIDDICCAIKEMRVRGAPAIAVSAALALAVVAERELKEQRQNSVWKTADDMRQFLLMSCDKMMSARPTAVNLSKVLIQLKKDIETDKANTMEAVLETCVQLAEKIYAADVSFNERIMRHGAAHLLKLASKERVNILTICNTGALATSRYGTALGIVRQLFYEGHLQHLYACETRPWNQGARLTVYECVQENIPCTLICDSAVSAVMKTHDIDAVVVGADRICKNGDTANKIGTYNLAVAAAYHKVPFFVAAPSTTLDPLTPDGEGVVIEEREATEITHIASGGGGLQSDKSNSDYGRKRVVADGPHLKVWNPVFDITPASLITGGIITEHGVFPPATAGPLFDISRIVEP.

D255 (proton donor) is an active-site residue.

Belongs to the eIF-2B alpha/beta/delta subunits family. MtnA subfamily.

It localises to the cytoplasm. Its subcellular location is the nucleus. The enzyme catalyses 5-(methylsulfanyl)-alpha-D-ribose 1-phosphate = 5-(methylsulfanyl)-D-ribulose 1-phosphate. It participates in amino-acid biosynthesis; L-methionine biosynthesis via salvage pathway; L-methionine from S-methyl-5-thio-alpha-D-ribose 1-phosphate: step 1/6. Its function is as follows. Catalyzes the interconversion of methylthioribose-1-phosphate (MTR-1-P) into methylthioribulose-1-phosphate (MTRu-1-P). The protein is Methylthioribose-1-phosphate isomerase of Trypanosoma brucei brucei (strain 927/4 GUTat10.1).